The sequence spans 279 residues: Putative pyruvate, phosphate dikinase regulatory protein (279 aa).

153–160 (GVSRTSKT) provides a ligand contact to ADP.

Belongs to the pyruvate, phosphate/water dikinase regulatory protein family. PDRP subfamily.

It carries out the reaction N(tele)-phospho-L-histidyl/L-threonyl-[pyruvate, phosphate dikinase] + ADP = N(tele)-phospho-L-histidyl/O-phospho-L-threonyl-[pyruvate, phosphate dikinase] + AMP + H(+). It catalyses the reaction N(tele)-phospho-L-histidyl/O-phospho-L-threonyl-[pyruvate, phosphate dikinase] + phosphate + H(+) = N(tele)-phospho-L-histidyl/L-threonyl-[pyruvate, phosphate dikinase] + diphosphate. In terms of biological role, bifunctional serine/threonine kinase and phosphorylase involved in the regulation of the pyruvate, phosphate dikinase (PPDK) by catalyzing its phosphorylation/dephosphorylation. This is Putative pyruvate, phosphate dikinase regulatory protein from Rhodopseudomonas palustris (strain HaA2).